The chain runs to 469 residues: Glutamate--tRNA ligase 2 (469 aa).

The 'HIGH' region signature appears at 10-20; it reads PSPTGFLHIGS. A 'KMSKS' region motif is present at residues 239-243; that stretch reads KLSKR. Residue lysine 242 participates in ATP binding.

The protein belongs to the class-I aminoacyl-tRNA synthetase family. Glutamate--tRNA ligase type 1 subfamily. As to quaternary structure, monomer.

It localises to the cytoplasm. The catalysed reaction is tRNA(Glu) + L-glutamate + ATP = L-glutamyl-tRNA(Glu) + AMP + diphosphate. Functionally, catalyzes the attachment of glutamate to tRNA(Glu) in a two-step reaction: glutamate is first activated by ATP to form Glu-AMP and then transferred to the acceptor end of tRNA(Glu). The chain is Glutamate--tRNA ligase 2 from Rickettsia typhi (strain ATCC VR-144 / Wilmington).